A 238-amino-acid chain; its full sequence is Ribitol-5-phosphate cytidylyltransferase 1 (238 aa).

CTP contacts are provided by residues 7-10 (LAGG) and 81-87 (GSDRNDT).

It belongs to the IspD/TarI cytidylyltransferase family. TarI subfamily.

The catalysed reaction is D-ribitol 5-phosphate + CTP + H(+) = CDP-L-ribitol + diphosphate. It participates in cell wall biogenesis; poly(ribitol phosphate) teichoic acid biosynthesis. In terms of biological role, catalyzes the transfer of the cytidylyl group of CTP to D-ribitol 5-phosphate. This chain is Ribitol-5-phosphate cytidylyltransferase 1, found in Staphylococcus aureus (strain bovine RF122 / ET3-1).